Reading from the N-terminus, the 150-residue chain is MLYHLFVNNQVKLQNDFKPESVAAIRSSAFNSKGGTTVFNFLSAGENILLHISIRPGENVIVFNSRLKNGAWGPEERIPYAEKFRPPNPSITVIDHGDRFQIRFDYGTSIYYNKRIKENAAAIAYNAENSLFSSPVTVDVHGLLPPLPPA.

One can recognise a Galectin domain in the interval 9-141 (NQVKLQNDFK…FSSPVTVDVH (133 aa)). A carbohydrate-binding residues include His51, Arg55, Asn64, Glu75, and Arg77.

Homotetramer. Oligomerization is required for carbohydrate binding.

Its subcellular location is the secreted. The protein localises to the extracellular space. It localises to the extracellular matrix. It is found in the cell wall. The protein resides in the endomembrane system. Binds lactose. May play a role in fruiting body formation. Displays toxicity towards the nematode C.elegans by binding to a specific Gal-beta-1,4-Fuc-alpha-1,6 modification of N-glycan cores on C.elegans intestinal cells. This Coprinopsis cinerea (Inky cap fungus) protein is Galectin-2 (Cgl2).